The primary structure comprises 152 residues: Superoxide dismutase [Cu-Zn] 2 (152 aa).

The Cu cation site is built by His-45, His-47, and His-62. A disulfide bridge links Cys-56 with Cys-145. Residues His-62, His-70, His-79, and Asp-82 each contribute to the Zn(2+) site. His-119 contacts Cu cation.

Belongs to the Cu-Zn superoxide dismutase family. Homodimer. Requires Cu cation as cofactor. Zn(2+) serves as cofactor.

It localises to the cytoplasm. The enzyme catalyses 2 superoxide + 2 H(+) = H2O2 + O2. Its function is as follows. Destroys radicals which are normally produced within the cells and which are toxic to biological systems. This Oryza sativa subsp. japonica (Rice) protein is Superoxide dismutase [Cu-Zn] 2 (SODCC2).